The chain runs to 825 residues: Probable phosphoketolase (825 aa).

It belongs to the XFP family. Thiamine diphosphate is required as a cofactor.

The protein is Probable phosphoketolase of Bifidobacterium animalis subsp. lactis (strain AD011).